The primary structure comprises 366 residues: HTH-type transcriptional regulator MSMEG_6044/MSMEI_5883 (366 aa).

Positions 11–66 (ATLASLAAELKVSRTTISNAYNRPDQLSADLRERIFDAAKRLGYPGPDPVARSLRT) constitute an HTH lacI-type domain. Positions 13–32 (LASLAAELKVSRTTISNAYN) form a DNA-binding region, H-T-H motif.

Its function is as follows. Transcriptional regulator that negatively regulates transcription of the mce4 operon, which is involved in cholesterol transport and utilization. Acts by binding to the promoter region of the mce4 operon. In Mycolicibacterium smegmatis (strain ATCC 700084 / mc(2)155) (Mycobacterium smegmatis), this protein is HTH-type transcriptional regulator MSMEG_6044/MSMEI_5883.